The chain runs to 846 residues: Major vault protein beta (846 aa).

Residue A2 is modified to N-acetylalanine. MVP repeat units lie at residues 2-60, 61-115, 116-172, 173-225, 226-280, 281-332, 333-388, 389-458, and 459-521; these read ATPV…IPPR, QYCI…QPVP, LQVI…EPVR, AVII…GFIQ, ALVL…RDIK, AITL…IQNV, NVLS…RRKR, IPLD…STKV, and ITYR…FLGP.

In terms of assembly, the vault ribonucleoprotein particle is a huge (400 A x 670 A) cage structure of 12.9 MDa. It consists of a dimer of half-vaults, with each half-vault comprising 39 identical major vault protein (MVP) chains. Dictyostelium is one of the few organisms in which the major component is actually two proteins (alpha and beta).

Its subcellular location is the cytoplasm. It localises to the nucleus. Its function is as follows. Unknown, though MVP-beta is required for normal vault structure. The protein is Major vault protein beta (mvpB) of Dictyostelium discoideum (Social amoeba).